Reading from the N-terminus, the 170-residue chain is MNAISLVQGDITTAHVDAIVNAANPRMLGGGGVDGAIHRAAGPALINACYAVDDVDGIRCPFGDARITEAGNLNARYVIHAVGPIYDKFADPKTVLESAYQRSLDLALANHCQSVALPAISCGVYGYPPQEAAEVAMAVCQRPEYAALDMRFYLFSEEMLSIWQHALTQH.

Residues 1 to 170 (MNAISLVQGD…SIWQHALTQH (170 aa)) form the Macro domain.

The protein belongs to the MacroD-type family.

This is Macro domain-containing protein VPA0103 from Vibrio parahaemolyticus serotype O3:K6 (strain RIMD 2210633).